The primary structure comprises 198 residues: NADH-quinone oxidoreductase subunit C (198 aa).

Belongs to the complex I 30 kDa subunit family. As to quaternary structure, NDH-1 is composed of 14 different subunits. Subunits NuoB, C, D, E, F, and G constitute the peripheral sector of the complex.

It is found in the cell inner membrane. The catalysed reaction is a quinone + NADH + 5 H(+)(in) = a quinol + NAD(+) + 4 H(+)(out). Its function is as follows. NDH-1 shuttles electrons from NADH, via FMN and iron-sulfur (Fe-S) centers, to quinones in the respiratory chain. The immediate electron acceptor for the enzyme in this species is believed to be ubiquinone. Couples the redox reaction to proton translocation (for every two electrons transferred, four hydrogen ions are translocated across the cytoplasmic membrane), and thus conserves the redox energy in a proton gradient. This Herminiimonas arsenicoxydans protein is NADH-quinone oxidoreductase subunit C.